Consider the following 634-residue polypeptide: DNA mismatch repair protein MutL (634 aa).

The segment at 406–427 (HTHHNDTKGSVHTKSFSARSSS) is disordered.

Belongs to the DNA mismatch repair MutL/HexB family.

Functionally, this protein is involved in the repair of mismatches in DNA. It is required for dam-dependent methyl-directed DNA mismatch repair. May act as a 'molecular matchmaker', a protein that promotes the formation of a stable complex between two or more DNA-binding proteins in an ATP-dependent manner without itself being part of a final effector complex. This Anaplasma phagocytophilum (strain HZ) protein is DNA mismatch repair protein MutL.